Here is a 543-residue protein sequence, read N- to C-terminus: CTP synthase (543 aa).

Residues 1 to 265 are amidoligase domain; sequence MTNYIFVTGG…DQLVVDRFGL (265 aa). Serine 13 is a CTP binding site. UTP is bound at residue serine 13. Residues 14–19 and aspartate 71 each bind ATP; that span reads SLGKGI. Residues aspartate 71 and glutamate 139 each coordinate Mg(2+). CTP is bound by residues 146-148, 186-191, and lysine 222; these read DIE and KTKPTQ. Residues 186–191 and lysine 222 each bind UTP; that span reads KTKPTQ. An ATP-binding site is contributed by 238-240; that stretch reads KDV. A Glutamine amidotransferase type-1 domain is found at 290–541; sequence NIGMIGKYVE…VAAAGKYQKE (252 aa). Glycine 351 is an L-glutamine binding site. The active-site Nucleophile; for glutamine hydrolysis is cysteine 378. Residues 379–382, glutamate 402, and arginine 469 contribute to the L-glutamine site; that span reads LGMQ. Residues histidine 514 and glutamate 516 contribute to the active site.

The protein belongs to the CTP synthase family. As to quaternary structure, homotetramer.

The catalysed reaction is UTP + L-glutamine + ATP + H2O = CTP + L-glutamate + ADP + phosphate + 2 H(+). It carries out the reaction L-glutamine + H2O = L-glutamate + NH4(+). The enzyme catalyses UTP + NH4(+) + ATP = CTP + ADP + phosphate + 2 H(+). It participates in pyrimidine metabolism; CTP biosynthesis via de novo pathway; CTP from UDP: step 2/2. Its activity is regulated as follows. Allosterically activated by GTP, when glutamine is the substrate; GTP has no effect on the reaction when ammonia is the substrate. The allosteric effector GTP functions by stabilizing the protein conformation that binds the tetrahedral intermediate(s) formed during glutamine hydrolysis. Inhibited by the product CTP, via allosteric rather than competitive inhibition. In terms of biological role, catalyzes the ATP-dependent amination of UTP to CTP with either L-glutamine or ammonia as the source of nitrogen. Regulates intracellular CTP levels through interactions with the four ribonucleotide triphosphates. The chain is CTP synthase from Alteromonas mediterranea (strain DSM 17117 / CIP 110805 / LMG 28347 / Deep ecotype).